A 176-amino-acid chain; its full sequence is Small ribosomal subunit protein uS4 (176 aa).

In terms of domain architecture, S4 RNA-binding spans 104–166 (RRLQTIVYKK…PTSPFKQNPP (63 aa)).

The protein belongs to the universal ribosomal protein uS4 family. Part of the 30S ribosomal subunit. Contacts protein S5. The interaction surface between S4 and S5 is involved in control of translational fidelity.

Its function is as follows. One of the primary rRNA binding proteins, it binds directly to 16S rRNA where it nucleates assembly of the body of the 30S subunit. Functionally, with S5 and S12 plays an important role in translational accuracy. This Sulfolobus acidocaldarius (strain ATCC 33909 / DSM 639 / JCM 8929 / NBRC 15157 / NCIMB 11770) protein is Small ribosomal subunit protein uS4 (rps4).